A 151-amino-acid polypeptide reads, in one-letter code: MPELKVEVIPEGTVIDHIPAGKWLKVIEILGLTKPNGGTLLIASNVPSKKLGRKDIVKVEGRYLSEEEVNKIALIAPDATVNIVRDYKIVEKFKVSIPDEIVGILTCPNPNCVSNHEYVRPRFKVESREPLKLRCHYCERTIEGEEIIGNL.

Zn(2+)-binding residues include Cys107, Cys112, Cys135, and Cys138.

The protein belongs to the PyrI family. In terms of assembly, contains catalytic and regulatory chains. It depends on Zn(2+) as a cofactor.

Its function is as follows. Involved in allosteric regulation of aspartate carbamoyltransferase. The chain is Aspartate carbamoyltransferase regulatory chain from Thermococcus gammatolerans (strain DSM 15229 / JCM 11827 / EJ3).